The sequence spans 628 residues: Chaperone protein DnaK (628 aa).

A Phosphothreonine; by autocatalysis modification is found at T197. A compositionally biased stretch (basic and acidic residues) spans 595–604 (AEAMYKKEQG). Residues 595-628 (AEAMYKKEQGEQAGAQPNQKAKKDDDDVIDAEVE) form a disordered region.

This sequence belongs to the heat shock protein 70 family.

Acts as a chaperone. This Aliarcobacter butzleri (strain RM4018) (Arcobacter butzleri) protein is Chaperone protein DnaK.